The sequence spans 214 residues: Large ribosomal subunit protein uL16 (214 aa).

Arg32 is modified (citrulline). Lys175 participates in a covalent cross-link: Glycyl lysine isopeptide (Lys-Gly) (interchain with G-Cter in SUMO2). Lys188 is covalently cross-linked (Glycyl lysine isopeptide (Lys-Gly) (interchain with G-Cter in ubiquitin)).

Belongs to the universal ribosomal protein uL16 family. In terms of assembly, component of the large ribosomal subunit. Mature ribosomes consist of a small (40S) and a large (60S) subunit. The 40S subunit contains about 33 different proteins and 1 molecule of RNA (18S). The 60S subunit contains about 49 different proteins and 3 molecules of RNA (28S, 5.8S and 5S). Citrullinated by PADI4. In terms of processing, ufmylated by UFL1.

Its subcellular location is the cytoplasm. In terms of biological role, component of the large ribosomal subunit. Plays a role in the formation of actively translating ribosomes. May play a role in the embryonic brain development. This Oryctolagus cuniculus (Rabbit) protein is Large ribosomal subunit protein uL16 (RPL10).